A 574-amino-acid polypeptide reads, in one-letter code: Myo-inositol transporter FST1 (574 aa).

The Cytoplasmic segment spans residues 1–76 (MGKSRQNSTT…VQFANPKHFT (76 aa)). Residues 77–97 (WLLVAFASMGGLLSGLDQSLI) form a helical membrane-spanning segment. The Extracellular segment spans residues 98-115 (SGANLFLPDDLGLTEHEN). Residues 116–136 (SLVNSGMPLGAVGGALLLSPA) form a helical membrane-spanning segment. Over 137–143 (NEYFGRK) the chain is Cytoplasmic. Residues 144-164 (GAIIISIILYTIGAALEAGSI) traverse the membrane as a helical segment. The Extracellular segment spans residues 165–173 (NFGMIVSSR). Residues 174–194 (VILGLGVGLEGGTVPVYVAET) traverse the membrane as a helical segment. At 195 to 205 (VERRIRGNLVS) the chain is on the cytoplasmic side. The chain crosses the membrane as a helical span at residues 206–226 (LYQFNIALGEVLGYAVGAIFL). Topologically, residues 227–233 (NVPGNWR) are extracellular. A helical membrane pass occupies residues 234–254 (YILGSSLLFSTIMFFGMLFLP). Residues 255 to 330 (ESPRFLIHQK…RARRALVYAN (76 aa)) lie on the Cytoplasmic side of the membrane. A helical transmembrane segment spans residues 331-351 (IMILLGQLTGVNAIMYYMSVL). The Extracellular segment spans residues 352-363 (MNQIGFDKKESN). Residues 364-384 (YMSLVGGGSLLLGTIPAIFLM) traverse the membrane as a helical segment. At 385 to 390 (ERFGRR) the chain is on the cytoplasmic side. A helical membrane pass occupies residues 391-411 (FWAITMLPGFFIGLVLIGVSY). Residues 412-426 (QFDVETQLQTVEGLY) lie on the Extracellular side of the membrane. The helical transmembrane segment at 427 to 447 (LSGLIIYMGFFGSYACLTWVV) threads the bilayer. Topologically, residues 448–465 (PSEVYPTYLRSYGMTTSD) are cytoplasmic. Residues 466–486 (ALLFLASFIVTYNFTAMQNAM) traverse the membrane as a helical segment. The Extracellular portion of the chain corresponds to 487–490 (GKTG). The helical transmembrane segment at 491–511 (LALGFYGGIAFIGEIYQIFFM) threads the bilayer. Topologically, residues 512 to 574 (PETKNKTLEE…PKDQVQVSHA (63 aa)) are cytoplasmic.

Belongs to the major facilitator superfamily. Sugar transporter (TC 2.A.1.1) family.

The protein localises to the cell membrane. The enzyme catalyses myo-inositol(out) + H(+)(out) = myo-inositol(in) + H(+)(in). Functionally, transporter for myo-inositol. Also appears to transport the polyketide mycotoxin fumonisin B1 (FB1). Does not appear to transport hexose sugars. In Gibberella moniliformis (strain M3125 / FGSC 7600) (Maize ear and stalk rot fungus), this protein is Myo-inositol transporter FST1.